The primary structure comprises 334 residues: Dihydroorotate dehydrogenase (quinone) (334 aa).

FMN contacts are provided by residues 59 to 63 (AGLDK) and threonine 83. Lysine 63 serves as a coordination point for substrate. 108–112 (NRMGF) is a substrate binding site. FMN contacts are provided by asparagine 136 and asparagine 169. Asparagine 169 is a binding site for substrate. The active-site Nucleophile is serine 172. Asparagine 174 contributes to the substrate binding site. Lysine 214 and threonine 242 together coordinate FMN. 243–244 (NT) contributes to the substrate binding site. Residues glycine 265, glycine 294, and 315–316 (YS) each bind FMN.

It belongs to the dihydroorotate dehydrogenase family. Type 2 subfamily. In terms of assembly, monomer. FMN is required as a cofactor.

It is found in the cell membrane. The catalysed reaction is (S)-dihydroorotate + a quinone = orotate + a quinol. The protein operates within pyrimidine metabolism; UMP biosynthesis via de novo pathway; orotate from (S)-dihydroorotate (quinone route): step 1/1. Functionally, catalyzes the conversion of dihydroorotate to orotate with quinone as electron acceptor. The chain is Dihydroorotate dehydrogenase (quinone) from Acinetobacter baylyi (strain ATCC 33305 / BD413 / ADP1).